The primary structure comprises 106 residues: Large ribosomal subunit protein uL23 (106 aa).

The protein belongs to the universal ribosomal protein uL23 family. As to quaternary structure, part of the 50S ribosomal subunit. Contacts protein L29, and trigger factor when it is bound to the ribosome.

Its function is as follows. One of the early assembly proteins it binds 23S rRNA. One of the proteins that surrounds the polypeptide exit tunnel on the outside of the ribosome. Forms the main docking site for trigger factor binding to the ribosome. This Neisseria gonorrhoeae (strain ATCC 700825 / FA 1090) protein is Large ribosomal subunit protein uL23.